We begin with the raw amino-acid sequence, 366 residues long: Histidinol-phosphate aminotransferase (366 aa).

Lys231 is modified (N6-(pyridoxal phosphate)lysine).

It belongs to the class-II pyridoxal-phosphate-dependent aminotransferase family. Histidinol-phosphate aminotransferase subfamily. It depends on pyridoxal 5'-phosphate as a cofactor.

It carries out the reaction L-histidinol phosphate + 2-oxoglutarate = 3-(imidazol-4-yl)-2-oxopropyl phosphate + L-glutamate. It functions in the pathway amino-acid biosynthesis; L-histidine biosynthesis; L-histidine from 5-phospho-alpha-D-ribose 1-diphosphate: step 7/9. The sequence is that of Histidinol-phosphate aminotransferase from Halobacterium salinarum (strain ATCC 29341 / DSM 671 / R1).